We begin with the raw amino-acid sequence, 231 residues long: 5'-methylthioadenosine/S-adenosylhomocysteine nucleosidase (231 aa).

Glu12 (proton acceptor) is an active-site residue. Residues Gly78, Met153, and 174–175 (ME) each bind substrate. Asp198 functions as the Proton donor in the catalytic mechanism.

The protein belongs to the PNP/UDP phosphorylase family. MtnN subfamily.

The enzyme catalyses S-adenosyl-L-homocysteine + H2O = S-(5-deoxy-D-ribos-5-yl)-L-homocysteine + adenine. It carries out the reaction S-methyl-5'-thioadenosine + H2O = 5-(methylsulfanyl)-D-ribose + adenine. The catalysed reaction is 5'-deoxyadenosine + H2O = 5-deoxy-D-ribose + adenine. Its pathway is amino-acid biosynthesis; L-methionine biosynthesis via salvage pathway; S-methyl-5-thio-alpha-D-ribose 1-phosphate from S-methyl-5'-thioadenosine (hydrolase route): step 1/2. In terms of biological role, catalyzes the irreversible cleavage of the glycosidic bond in both 5'-methylthioadenosine (MTA) and S-adenosylhomocysteine (SAH/AdoHcy) to adenine and the corresponding thioribose, 5'-methylthioribose and S-ribosylhomocysteine, respectively. Also cleaves 5'-deoxyadenosine, a toxic by-product of radical S-adenosylmethionine (SAM) enzymes, into 5-deoxyribose and adenine. The sequence is that of 5'-methylthioadenosine/S-adenosylhomocysteine nucleosidase from Bacillus thuringiensis subsp. konkukian (strain 97-27).